Consider the following 305-residue polypeptide: tRNA pseudouridine synthase B (305 aa).

The active-site Nucleophile is D39.

This sequence belongs to the pseudouridine synthase TruB family. Type 1 subfamily.

The enzyme catalyses uridine(55) in tRNA = pseudouridine(55) in tRNA. Functionally, responsible for synthesis of pseudouridine from uracil-55 in the psi GC loop of transfer RNAs. The polypeptide is tRNA pseudouridine synthase B (Staphylococcus aureus (strain MW2)).